The sequence spans 418 residues: Chromo domain-containing protein rhino (418 aa).

Residues 24-74 (YVVEKILGKRFVNGRPQVLVKWSGFPNENNTWEPLENVGNCMKLVSDFESE) form the Chromo domain. Low complexity-rich tracts occupy residues 84 to 99 (AKSV…SSGP) and 107 to 120 (SSSK…KSVQ). Disordered stretches follow at residues 84–167 (AKSV…TDST) and 199–337 (PTKD…RCPR). A compositionally biased stretch (basic residues) spans 131 to 143 (NQKKGKNIKKTAG). The segment covering 152-167 (PKTQMPSTSQVSTDST) has biased composition (polar residues). The segment covering 218–228 (RLIEFPQREDA) has biased composition (basic and acidic residues). A compositionally biased stretch (low complexity) spans 258 to 275 (GESSSSMSLPTVSSTSSE). The segment covering 276–285 (KSIKVTKSEP) has biased composition (basic and acidic residues). The required for interaction with del/deadlock stretch occupies residues 353–418 (TKPFGVNRGL…FESLRIIVPK (66 aa)).

In terms of assembly, homodimer in solution. Dimerization is essential for chromatin binding. Component of the Rhino-Deadlock-Cutoff (RDC) complex, composed of rhi/rhino, del/deadlock and cuff/cutoff. Interacts (via C-terminus) with del/deadlock (via N-terminus); this interaction is direct. Two copies of del/deadlock associate with each rhi/rhino dimer. Interacts with cuff/cutoff; this interaction is indirect and is mediated by del/deadlock. Interacts (via Chromo domain) with kipf/kipferl (via C2H2 type zinc finger 4). Interacts (via Chromo domain) with His3/histone H3 (via N-terminus di- or tri-methylated on 'Lys-10' (H3K9me2/3)); this interaction is direct. Two His3 N-terminal tails oriented anti-parallel to each other are required for dimer binding to His3. Female specific, expressed in both somatic and germline cells but highly enriched in ovaries. In the germarium of the developing oocyte expressed in germline stem cells, cystoblasts and developing germline cysts. Expressed in nurse cells in the germarium and egg chamber.

The protein resides in the nucleus. It is found in the chromosome. Functionally, involved in piRNA (piwi-interacting RNA)-mediated transposon repression. May be involved in formation of the perinuclear nuage, a subcellular structure implicated in RNA processing that may be involved in transposon RNA surveillance and silencing. Required for ping-pong amplification during piRNA biogenesis, probably by promoting transcription of piRNA precursors. As part of the Rhino-Deadlock-Cutoff (RDC) Complex associates with, and drives non-canonical transcription of germline specific dual-strand piRNA clusters 80F, 38C and 42AB, but not single-stranded piRNA cluster 20A. Induction of piRNA expression is potentially achieved through a mechanism that prevents transcriptional termination and leads to readthrough from flanking transcription units. Recruited to specific chromatin regions by a combination of H3K9me2/3 histone methylation and differentially expressed sequence-specific recruitment factors. This association may involve direct interaction with DNA. Associates with chromatin upon exposure to homologous piRNA and facilitates transcriptional read-through. As part of the RDC complex, involved in suppression of splicing. In ovaries, recruitment to specific heterochromatin clusters is nucleated and stabilized by kipf/kipferl. During oogenesis, involved in axis specification and may regulate chromosome condensation at the onset of a mitotic-like phase that occurs during nurse cell chromosome duplication. Involved in the distribution of mRNAs for proteins that play a role in anterior-posterior and dorsal-ventral axes specification during development of the oocyte, including grk/gurken, osk/oskar and vas/vasa. Mitigates meiotic double strand breaks and interacts with DNA damage signaling to mediate axis specification. The sequence is that of Chromo domain-containing protein rhino from Drosophila melanogaster (Fruit fly).